The sequence spans 358 residues: DNA replication and repair protein RecF (358 aa).

30-37 (GNNGSGKT) is a binding site for ATP.

This sequence belongs to the RecF family.

It localises to the cytoplasm. In terms of biological role, the RecF protein is involved in DNA metabolism; it is required for DNA replication and normal SOS inducibility. RecF binds preferentially to single-stranded, linear DNA. It also seems to bind ATP. The sequence is that of DNA replication and repair protein RecF from Histophilus somni (strain 129Pt) (Haemophilus somnus).